Reading from the N-terminus, the 397-residue chain is Cysteine desulfurase IscS (397 aa).

Residues 72-73 (GS), asparagine 152, glutamine 180, and 200-202 (SAH) each bind pyridoxal 5'-phosphate. N6-(pyridoxal phosphate)lysine is present on lysine 203. Residue threonine 238 coordinates pyridoxal 5'-phosphate. The active-site Cysteine persulfide intermediate is the cysteine 328. A [2Fe-2S] cluster-binding site is contributed by cysteine 328.

This sequence belongs to the class-V pyridoxal-phosphate-dependent aminotransferase family. NifS/IscS subfamily. Homodimer. Forms a heterotetramer with IscU, interacts with other sulfur acceptors. Requires pyridoxal 5'-phosphate as cofactor.

The protein localises to the cytoplasm. It catalyses the reaction (sulfur carrier)-H + L-cysteine = (sulfur carrier)-SH + L-alanine. Its pathway is cofactor biosynthesis; iron-sulfur cluster biosynthesis. Its function is as follows. Master enzyme that delivers sulfur to a number of partners involved in Fe-S cluster assembly, tRNA modification or cofactor biosynthesis. Catalyzes the removal of elemental sulfur atoms from cysteine to produce alanine. Functions as a sulfur delivery protein for Fe-S cluster synthesis onto IscU, an Fe-S scaffold assembly protein, as well as other S acceptor proteins. In Clostridium botulinum (strain Kyoto / Type A2), this protein is Cysteine desulfurase IscS.